The chain runs to 277 residues: Outer membrane lipoprotein 1 (277 aa).

A signal peptide spans 1–19; that stretch reads MSFKKILGVALVSALALTA. Cysteine 20 is lipidated: N-palmitoyl cysteine. The S-diacylglycerol cysteine moiety is linked to residue cysteine 20.

Belongs to the NlpA lipoprotein family.

Its subcellular location is the cell outer membrane. This Mannheimia haemolytica (Pasteurella haemolytica) protein is Outer membrane lipoprotein 1 (plpA).